We begin with the raw amino-acid sequence, 876 residues long: MAP7 domain-containing protein 3 (876 aa).

The residue at position 1 (Met1) is an N-acetylmethionine. The stretch at 65 to 144 (NDIKQRLARE…DEAQKEKFTA (80 aa)) forms a coiled coil. Disordered stretches follow at residues 72–137 (ARER…KDEA) and 170–246 (AMAN…KPRV). The span at 171–183 (MANSESKTANKRS) shows a compositional bias: polar residues. The residue at position 185 (Ser185) is a Phosphoserine. Positions 191–211 (QGTSALIRQMPLSSAGLQNSV) are enriched in polar residues. Residues 214-244 (RKTDKERSSSLNRRDSNLHSSTDKEQAERKP) are compositionally biased toward basic and acidic residues. Ser322 is subject to Phosphoserine. The tract at residues 407–475 (EAAPEGSLEA…ARDAPKKSEM (69 aa)) is disordered. The segment covering 425–438 (APKESVKGSPKESM) has biased composition (basic and acidic residues). 3 positions are modified to phosphoserine: Ser441, Ser457, and Ser461. The segment covering 465 to 475 (KARDAPKKSEM) has biased composition (basic and acidic residues). Ser490 carries the phosphoserine modification. Disordered stretches follow at residues 509-533 (SPISTNRQIQKNCPPSPLPLISKQS), 613-697 (QREK…KKEH), and 723-754 (RKTDVNASKVTETSSHDIYEEAEADNEESDKD). A compositionally biased stretch (polar residues) spans 510-521 (PISTNRQIQKNC). A Phosphoserine modification is found at Ser524. 2 coiled-coil regions span residues 558 to 640 (VKKK…MAKE) and 689 to 724 (EADKRKKEHERIMLQNLQERLERKKRIEEIMKRTRK). 2 stretches are compositionally biased toward basic and acidic residues: residues 613-639 (QREKEEEERQREEMQQRVIKKSKDMAK) and 680-697 (GDAKIKAQEEADKRKKEH). Over residues 742–752 (EEAEADNEESD) the composition is skewed to acidic residues. A phosphoserine mark is found at Ser770 and Ser817. The tract at residues 802–876 (PKTYFNGDLK…LPKSSDTFRQ (75 aa)) is disordered. Polar residues predominate over residues 820-830 (DTSIQEVVSRP). A compositionally biased stretch (basic residues) spans 831–842 (SSKRMTSHTTKT). Phosphoserine is present on Ser832. The span at 848–860 (TNTTSRSSAQTKS) shows a compositional bias: polar residues. The segment covering 861-876 (EGFHDILPKSSDTFRQ) has biased composition (basic and acidic residues).

Belongs to the MAP7 family. As to quaternary structure, interacts (via N-terminus coiled coil domains) with tubulin and microtubules.

It is found in the cytoplasm. The protein localises to the cytoskeleton. Its subcellular location is the spindle. Functionally, promotes the assembly and stability of microtubules. This chain is MAP7 domain-containing protein 3 (MAP7D3), found in Homo sapiens (Human).